The primary structure comprises 74 residues: UPF0346 protein PEPE_1063 (74 aa).

This sequence belongs to the UPF0346 family.

The protein is UPF0346 protein PEPE_1063 of Pediococcus pentosaceus (strain ATCC 25745 / CCUG 21536 / LMG 10740 / 183-1w).